The chain runs to 147 residues: Myoglobin (147 aa).

The region spanning 2 to 141 is the Globin domain; the sequence is HDAELVLKCW…VIGDIDTYYK (140 aa). His-60 is a nitrite binding site. His-60 provides a ligand contact to O2. His-89 is a binding site for heme b.

The protein belongs to the globin family. As to quaternary structure, monomeric.

Its subcellular location is the cytoplasm. The protein localises to the sarcoplasm. The catalysed reaction is Fe(III)-heme b-[protein] + nitric oxide + H2O = Fe(II)-heme b-[protein] + nitrite + 2 H(+). The enzyme catalyses H2O2 + AH2 = A + 2 H2O. Monomeric heme protein which primary function is to store oxygen and facilitate its diffusion within muscle tissues. Reversibly binds oxygen through a pentacoordinated heme iron and enables its timely and efficient release as needed during periods of heightened demand. Depending on the oxidative conditions of tissues and cells, and in addition to its ability to bind oxygen, it also has a nitrite reductase activity whereby it regulates the production of bioactive nitric oxide. Under stress conditions, like hypoxia and anoxia, it also protects cells against reactive oxygen species thanks to its pseudoperoxidase activity. The chain is Myoglobin (mb) from Cyprinus carpio (Common carp).